A 327-amino-acid chain; its full sequence is GTP 3',8-cyclase (327 aa).

The 225-residue stretch at 8-232 folds into the Radical SAM core domain; that stretch reads AFARKFYYLR…LQRSRSDGPA (225 aa). Residue Arg17 coordinates GTP. [4Fe-4S] cluster-binding residues include Cys24 and Cys28. Residue Tyr30 coordinates S-adenosyl-L-methionine. Residue Cys31 coordinates [4Fe-4S] cluster. Position 66 (Arg66) interacts with GTP. Position 70 (Gly70) interacts with S-adenosyl-L-methionine. Thr97 contributes to the GTP binding site. Ser121 is an S-adenosyl-L-methionine binding site. Lys158 is a GTP binding site. Met192 lines the S-adenosyl-L-methionine pocket. The [4Fe-4S] cluster site is built by Cys255 and Cys258. Residue 260–262 participates in GTP binding; it reads RLR. Cys272 lines the [4Fe-4S] cluster pocket.

It belongs to the radical SAM superfamily. MoaA family. As to quaternary structure, monomer and homodimer. Requires [4Fe-4S] cluster as cofactor.

The enzyme catalyses GTP + AH2 + S-adenosyl-L-methionine = (8S)-3',8-cyclo-7,8-dihydroguanosine 5'-triphosphate + 5'-deoxyadenosine + L-methionine + A + H(+). It participates in cofactor biosynthesis; molybdopterin biosynthesis. In terms of biological role, catalyzes the cyclization of GTP to (8S)-3',8-cyclo-7,8-dihydroguanosine 5'-triphosphate. The sequence is that of GTP 3',8-cyclase from Photorhabdus laumondii subsp. laumondii (strain DSM 15139 / CIP 105565 / TT01) (Photorhabdus luminescens subsp. laumondii).